We begin with the raw amino-acid sequence, 412 residues long: Serine hydroxymethyltransferase 1 (412 aa).

(6S)-5,6,7,8-tetrahydrofolate-binding positions include Leu116 and Gly120 to Leu122. N6-(pyridoxal phosphate)lysine is present on Lys225.

The protein belongs to the SHMT family. Homodimer. It depends on pyridoxal 5'-phosphate as a cofactor.

It localises to the cytoplasm. It carries out the reaction (6R)-5,10-methylene-5,6,7,8-tetrahydrofolate + glycine + H2O = (6S)-5,6,7,8-tetrahydrofolate + L-serine. The protein operates within one-carbon metabolism; tetrahydrofolate interconversion. Its pathway is amino-acid biosynthesis; glycine biosynthesis; glycine from L-serine: step 1/1. Functionally, catalyzes the reversible interconversion of serine and glycine with tetrahydrofolate (THF) serving as the one-carbon carrier. This reaction serves as the major source of one-carbon groups required for the biosynthesis of purines, thymidylate, methionine, and other important biomolecules. Also exhibits THF-independent aldolase activity toward beta-hydroxyamino acids, producing glycine and aldehydes, via a retro-aldol mechanism. The polypeptide is Serine hydroxymethyltransferase 1 (Pseudomonas fluorescens (strain Pf0-1)).